A 220-amino-acid polypeptide reads, in one-letter code: MARRPARCYRYCKNKPYPKSRYNRAVPDAKIRIYDLGRKKATVDEFPLCIHLVSNELEQLSSEALEAARICANKYITKVSGRDSFHLRVRVHPFHVLRINKMLSCAGADRLQQGMRGAWGKPHGLAARVSIGQIIMSARTKDSNKDVVIEGLRRARYKFPGQQKIIISKKWGFTPLNRDEYIAKKTNGEVIDDGAYVKFLSRKGNLEANLQQFPNYQYSA.

Belongs to the universal ribosomal protein uL16 family. Component of the large ribosomal subunit. Mature ribosomes consist of a small (40S) and a large (60S) subunit. The 40S subunit contains about 32 different proteins and 1 molecule of RNA (18S). The 60S subunit contains 45 different proteins and 3 molecules of RNA (25S, 5.8S and 5S).

The protein resides in the cytoplasm. Its function is as follows. Component of the ribosome, a large ribonucleoprotein complex responsible for the synthesis of proteins in the cell. The small ribosomal subunit (SSU) binds messenger RNAs (mRNAs) and translates the encoded message by selecting cognate aminoacyl-transfer RNA (tRNA) molecules. The large subunit (LSU) contains the ribosomal catalytic site termed the peptidyl transferase center (PTC), which catalyzes the formation of peptide bonds, thereby polymerizing the amino acids delivered by tRNAs into a polypeptide chain. The nascent polypeptides leave the ribosome through a tunnel in the LSU and interact with protein factors that function in enzymatic processing, targeting, and the membrane insertion of nascent chains at the exit of the ribosomal tunnel. The chain is Large ribosomal subunit protein uL16 from Candida albicans (strain SC5314 / ATCC MYA-2876) (Yeast).